The chain runs to 131 residues: Agouti-signaling protein (131 aa).

The N-terminal stretch at 1 to 22 (MDVTRLLLATLVGFLCFLTVHS) is a signal peptide. Residue Asn-39 is glycosylated (N-linked (GlcNAc...) asparagine). A disordered region spans residues 58–96 (KSKKISRKEAEKRKRSSKKKASIKKVARPPPPSPCVATR). A compositionally biased stretch (basic residues) spans 70–84 (RKRSSKKKASIKKVA). 5 disulfides stabilise this stretch: Cys-92/Cys-107, Cys-99/Cys-113, Cys-106/Cys-124, Cys-110/Cys-131, and Cys-115/Cys-122. The Agouti domain maps to 92–131 (CVATRDSCKPPAPACCNPCASCQCRFFGSACTCRVLNPNC).

The protein resides in the secreted. In terms of biological role, involved in the regulation of melanogenesis. The binding of ASP to MC1R precludes alpha-MSH initiated signaling and thus blocks production of cAMP, leading to a down-regulation of eumelanogenesis (brown/black pigment) and thus increasing synthesis of pheomelanin (yellow/red pigment). The protein is Agouti-signaling protein of Rattus norvegicus (Rat).